The primary structure comprises 119 residues: NADH-quinone oxidoreductase subunit A (119 aa).

3 consecutive transmembrane segments (helical) span residues 9–29, 63–83, and 88–108; these read VLLF…LGYV, LVAI…PWAV, and VGVT…VGFA.

The protein belongs to the complex I subunit 3 family. In terms of assembly, NDH-1 is composed of 14 different subunits. Subunits NuoA, H, J, K, L, M, N constitute the membrane sector of the complex.

It is found in the cell inner membrane. The catalysed reaction is a quinone + NADH + 5 H(+)(in) = a quinol + NAD(+) + 4 H(+)(out). Its function is as follows. NDH-1 shuttles electrons from NADH, via FMN and iron-sulfur (Fe-S) centers, to quinones in the respiratory chain. The immediate electron acceptor for the enzyme in this species is believed to be ubiquinone. Couples the redox reaction to proton translocation (for every two electrons transferred, four hydrogen ions are translocated across the cytoplasmic membrane), and thus conserves the redox energy in a proton gradient. This is NADH-quinone oxidoreductase subunit A from Acidovorax sp. (strain JS42).